A 206-amino-acid chain; its full sequence is Large ribosomal subunit protein eL13z (206 aa).

The tract at residues 185–206 (TNKRHAGARAKRAAEAEKEEKK) is disordered. Residues 186-195 (NKRHAGARAK) show a composition bias toward basic residues. Residues 196–206 (RAAEAEKEEKK) are compositionally biased toward basic and acidic residues.

It belongs to the eukaryotic ribosomal protein eL13 family.

It localises to the cytoplasm. This Arabidopsis thaliana (Mouse-ear cress) protein is Large ribosomal subunit protein eL13z (RPL13B).